The sequence spans 258 residues: Phosphonates import ATP-binding protein PhnC 1 (258 aa).

The ABC transporter domain maps to 2–246 (IEFKDVGLVY…TFEEIYGRSI (245 aa)). 35 to 42 (GLSGAGKS) is a binding site for ATP.

This sequence belongs to the ABC transporter superfamily. Phosphonates importer (TC 3.A.1.9.1) family. In terms of assembly, the complex is composed of two ATP-binding proteins (PhnC), two transmembrane proteins (PhnE) and a solute-binding protein (PhnD).

It localises to the cell membrane. It carries out the reaction phosphonate(out) + ATP + H2O = phosphonate(in) + ADP + phosphate + H(+). In terms of biological role, part of the ABC transporter complex PhnCDE involved in phosphonates import. Responsible for energy coupling to the transport system. This is Phosphonates import ATP-binding protein PhnC 1 from Oceanobacillus iheyensis (strain DSM 14371 / CIP 107618 / JCM 11309 / KCTC 3954 / HTE831).